The sequence spans 544 residues: MAKFVFVTGGVVSSIGKGIVAASLGRLLKSRGYRVSILKLDPYLNVDPGTMSPFQHGEVFVTEDGAETDLDLGHYERFTDTAMSRLNSVTTGSVYQSVINKERRGDYNGGTVQVIPHITGEIRERIHRVAANSNADVVITEIGGTVGDIESLPYLEAIREFRGDVGRNDLAYVHVTLLPYIGTSGELKTKPTQHSVKELRSIGIQPDILVCRSDRPIDDELKAKIGGFCGVPTKAVVPSLDADSIYAVPIALEKGGLCRQVLDVLSLQDHESDMASWEALVQKLRNPGPAVKVALVGKYVQLNDAYLSVVEALRHACIHCDSALDLHWICAEQIEENGADGLLKGMDAVVVPGGFGNRGVDGKIAAIRWAREQRVPFLGLCLGMQTAVIEWARNTAGLVGATSAELEPATTHPVIHLLPEQQDVVDLGGTMRLGVYPCRLSPGSKAHELYGEEVVYERHRHRYEFNNAYRNLFLESGYEISGVSPDGRLVELIELKGHPYFLACQYHPEFLSRPGRPHPLFTGLIQAASQRLPQSPSEAISQRA.

The amidoligase domain stretch occupies residues 1–267; sequence MAKFVFVTGG…CRQVLDVLSL (267 aa). Ser-13 contacts CTP. Position 13 (Ser-13) interacts with UTP. Residues 14 to 19 and Asp-71 each bind ATP; that span reads SIGKGI. Mg(2+) is bound by residues Asp-71 and Glu-141. Residues 148–150, 188–193, and Lys-224 contribute to the CTP site; these read DIE and KTKPTQ. UTP is bound by residues 188 to 193 and Lys-224; that span reads KTKPTQ. Residues 292 to 534 enclose the Glutamine amidotransferase type-1 domain; it reads KVALVGKYVQ…IQAASQRLPQ (243 aa). Gly-354 contacts L-glutamine. Cys-381 acts as the Nucleophile; for glutamine hydrolysis in catalysis. Residues 382-385, Glu-405, and Arg-462 each bind L-glutamine; that span reads LGMQ. Residues His-507 and Glu-509 contribute to the active site.

This sequence belongs to the CTP synthase family. Homotetramer.

The catalysed reaction is UTP + L-glutamine + ATP + H2O = CTP + L-glutamate + ADP + phosphate + 2 H(+). It catalyses the reaction L-glutamine + H2O = L-glutamate + NH4(+). It carries out the reaction UTP + NH4(+) + ATP = CTP + ADP + phosphate + 2 H(+). The protein operates within pyrimidine metabolism; CTP biosynthesis via de novo pathway; CTP from UDP: step 2/2. With respect to regulation, allosterically activated by GTP, when glutamine is the substrate; GTP has no effect on the reaction when ammonia is the substrate. The allosteric effector GTP functions by stabilizing the protein conformation that binds the tetrahedral intermediate(s) formed during glutamine hydrolysis. Inhibited by the product CTP, via allosteric rather than competitive inhibition. In terms of biological role, catalyzes the ATP-dependent amination of UTP to CTP with either L-glutamine or ammonia as the source of nitrogen. Regulates intracellular CTP levels through interactions with the four ribonucleotide triphosphates. The chain is CTP synthase from Synechococcus sp. (strain RCC307).